The chain runs to 387 residues: MTPTELNLKAKALLETHFEDIVLSGEISKITLHGSGHWYFDLKDERSSIACAMFKGANLKVGFKPAVGDFLELCGSVSLYPESGRYQFIATSMKKAGFGDLEAQFLALKERLQKEGLFDPLFKKSLPKFPKKVGIITSKTSAALQDMLKLIHQKEYFLAKIYIFDALTQGNNAPFSLIQALKKADDMDLDVLIIARGGGSREDLFCFNDENLAREIFKAKTPIISAIGHEIDYVISDFVADFRAPTPSAAIDTLFYSKLDIEQSLDLMEEKLMQLWNHKIQNYENLLLNLSKFFKFNSLPKIIDEKIKQSHNIEKQLNHLLANQMRYNELKLDKLQNAYLQHENFFNKSKKFICIRKNGKIANLEDLKSDDIVILSSQTSQKEAKIL.

The protein belongs to the XseA family. Heterooligomer composed of large and small subunits.

The protein resides in the cytoplasm. The enzyme catalyses Exonucleolytic cleavage in either 5'- to 3'- or 3'- to 5'-direction to yield nucleoside 5'-phosphates.. Functionally, bidirectionally degrades single-stranded DNA into large acid-insoluble oligonucleotides, which are then degraded further into small acid-soluble oligonucleotides. The sequence is that of Exodeoxyribonuclease 7 large subunit from Campylobacter jejuni subsp. jejuni serotype O:6 (strain 81116 / NCTC 11828).